The sequence spans 494 residues: UDP-N-acetylmuramate--L-alanine ligase (494 aa).

Residue Gly122–Thr128 coordinates ATP.

It belongs to the MurCDEF family.

It localises to the cytoplasm. It catalyses the reaction UDP-N-acetyl-alpha-D-muramate + L-alanine + ATP = UDP-N-acetyl-alpha-D-muramoyl-L-alanine + ADP + phosphate + H(+). The protein operates within cell wall biogenesis; peptidoglycan biosynthesis. Functionally, cell wall formation. This Mycobacterium bovis (strain ATCC BAA-935 / AF2122/97) protein is UDP-N-acetylmuramate--L-alanine ligase.